Consider the following 309-residue polypeptide: Aromatic prenyltransferase (309 aa).

It belongs to the aromatic prenyltransferase family.

Its function is as follows. Prenyltransferase that attaches isoprenoid moieties to carbon atoms of aromatic substrates in an enzyme-catalyzed Friedel-Crafts reaction. Shows specificity for dimethylallyl diphosphate (DMAPP) and does not accept geranyl diphosphate (GPP) or isopentenyl diphosphate (IPP). Prenylates the artificial substrate 2,7-dihydroxynaphthalene (2,7-DHN), as well as dihydrophenazine-1-carboxylic acid and 4-hydroxybenzoic acid at lower levels. Only traces of products are detected with aspulvinone E or flaviolin as substrates; and no product is formed with L-tryptophan, L-tyrosine, or 4-hydroxyphenylpyruvate. Ptf seems no to be involved in the prenylation reaction in the biosynthesis of aspulvinone H and J and the physiological function of ptf remains unknown. The sequence is that of Aromatic prenyltransferase from Botryotinia fuckeliana (strain B05.10) (Noble rot fungus).